Consider the following 564-residue polypeptide: Juvenile hormone esterase (564 aa).

The signal sequence occupies residues 1–19 (MTSHVLALAFLLHACTALA). An N-linked (GlcNAc...) asparagine glycan is attached at Asn-81. Cys-89 and Cys-109 are oxidised to a cystine. An N-linked (GlcNAc...) asparagine glycan is attached at Asn-180. Ser-220 acts as the Acyl-ester intermediate in catalysis. Glu-351 (charge relay system) is an active-site residue. A glycan (N-linked (GlcNAc...) asparagine) is linked at Asn-402. His-465 acts as the Charge relay system in catalysis. Asn-515 carries an N-linked (GlcNAc...) asparagine glycan.

The protein belongs to the type-B carboxylesterase/lipase family.

The catalysed reaction is juvenile hormone I + H2O = juvenile hormone I carboxylate + methanol + H(+). The enzyme catalyses juvenile hormone III + H2O = juvenile hormone III carboxylate + methanol + H(+). Functionally, JH esterase plays a crucial role in the decrease of JH activity in lepidopteran insects, by hydrolyzing the methyl ester of JH. It is also involved in the transport of JH. The protein is Juvenile hormone esterase of Heliothis virescens (Tobacco budworm moth).